A 265-amino-acid chain; its full sequence is Apolipoprotein A-I (265 aa).

The signal sequence occupies residues 1–16; sequence MKAAVLIWLFLMGSQA. 2 repeat units span residues 66–87 and 88–109. A 10 X approximate tandem repeats region spans residues 66–265; sequence LKLLDNWDSL…EEYTKKLSSQ (200 aa). Methionine sulfoxide is present on Met-108. A 3; half-length repeat occupies 110–120; it reads KDLEEVKAQVQ. Repeat copies occupy residues 121–142, 143–164, 165–186, 187–208, and 209–230. At Met-134 the chain carries Methionine sulfoxide. The stretch at 231–241 is one 9; half-length repeat; it reads PALDDLRQGLL. Residues 242-265 form repeat 10; it reads PVLESFKVSFLSALEEYTKKLSSQ.

Belongs to the apolipoprotein A1/A4/E family. As to quaternary structure, homodimer. Interacts with APOA1BP and CLU. Component of a sperm activating protein complex (SPAP), consisting of APOA1, an immunoglobulin heavy chain, an immunoglobulin light chain and albumin. Interacts with NDRG1. Interacts with SCGB3A2. Interacts with NAXE and YJEFN3. In terms of processing, glycosylated. Palmitoylated. Post-translationally, phosphorylation sites are present in the extracellular medium.

The protein resides in the secreted. Its function is as follows. Participates in the reverse transport of cholesterol from tissues to the liver for excretion by promoting cholesterol efflux from tissues and by acting as a cofactor for the lecithin cholesterol acyltransferase (LCAT). As part of the SPAP complex, activates spermatozoa motility. This is Apolipoprotein A-I (APOA1) from Aotus nancymaae (Ma's night monkey).